A 237-amino-acid polypeptide reads, in one-letter code: Phosphoribosylaminoimidazole-succinocarboxamide synthase (237 aa).

The protein belongs to the SAICAR synthetase family.

The enzyme catalyses 5-amino-1-(5-phospho-D-ribosyl)imidazole-4-carboxylate + L-aspartate + ATP = (2S)-2-[5-amino-1-(5-phospho-beta-D-ribosyl)imidazole-4-carboxamido]succinate + ADP + phosphate + 2 H(+). Its pathway is purine metabolism; IMP biosynthesis via de novo pathway; 5-amino-1-(5-phospho-D-ribosyl)imidazole-4-carboxamide from 5-amino-1-(5-phospho-D-ribosyl)imidazole-4-carboxylate: step 1/2. The polypeptide is Phosphoribosylaminoimidazole-succinocarboxamide synthase (Methanosarcina acetivorans (strain ATCC 35395 / DSM 2834 / JCM 12185 / C2A)).